Reading from the N-terminus, the 25-residue chain is Metallothionein (25 aa).

Residues C3, C5, C11, C13, C18, C20, and C23 each coordinate Cu(+).

The protein belongs to the metallothionein superfamily. Type 8 family.

Functionally, the metallothioneins are involved in the cellular sequestration of toxic metal ions. Binds six copper (cuprous) ions. This is Metallothionein from Agaricus bisporus (White button mushroom).